The following is a 419-amino-acid chain: Keratin, type I cytoskeletal 47 kDa (419 aa).

Residues 1-81 (MSFRSSSSYS…SSSFSNFGGN (81 aa)) are head. The tract at residues 82 to 117 (DKQTMQNLNDRLASYLEKVRALEAANADLELKIREW) is coil 1A. The 316-residue stretch at 82–397 (DKQTMQNLND…RLLEGEFGSL (316 aa)) folds into the IF rod domain. Positions 118 to 139 (YEKQKGSGIGAGSKDFSKYFEI) are linker 1. Residues 140 to 231 (ISDLRNKILS…KNHEEEMSIA (92 aa)) are coil 1B. Residues 232 to 254 (KSSSAGQVNVEMDAAPGIDLNKI) form a linker 12 region. The tract at residues 255-393 (LSDMRADYET…ETYRRLLEGE (139 aa)) is coil 2. The tract at residues 394–419 (FGSLKSSIVQATEVSTSQSSSSSKKD) is tail.

This sequence belongs to the intermediate filament family. In terms of assembly, heterotetramer of two type I and two type II keratins.

The polypeptide is Keratin, type I cytoskeletal 47 kDa (xk81b2) (Xenopus laevis (African clawed frog)).